Here is a 158-residue protein sequence, read N- to C-terminus: Large ribosomal subunit protein uL15 (158 aa).

Residues 1 to 13 (MKLNEIKDNEGST) are compositionally biased toward basic and acidic residues. Residues 1 to 45 (MKLNEIKDNEGSTHSRKRLGRGIGSGSGKTGGRGVKGQKSRSGVA) form a disordered region. The span at 21 to 35 (RGIGSGSGKTGGRGV) shows a compositional bias: gly residues.

Belongs to the universal ribosomal protein uL15 family. Part of the 50S ribosomal subunit.

In terms of biological role, binds to the 23S rRNA. The sequence is that of Large ribosomal subunit protein uL15 from Rhizobium etli (strain CIAT 652).